The primary structure comprises 369 residues: MRDNTQHYRELFLDDIPLMDVRAPVEYHKGAFPNTVNRPLMNDIERQKVGTSYKQHGQQAAIALGHELVCGALKAERLAAWKAFAEANPNGYLYCFRGGLRSQIVQQWLKQDAGIDYPRVIGGYKALRNFLFETTRAAVDECDFVLVGGLTGCGKTEVIAALDNSLDLEGHANHRGSSFGRRATPQPAQIDFENRLAIDILKKRHRGVGQFVLEDEGRIVGSCSLPLELYQGMQSYPLVWLEDAFEQRVERILRDYVIDLRSEFERVVGVEEGFAAFSAYLQKSLAGIVKRLGGERYQRLAAILVQALEEQGRDGSVDTHRGWIEGLLKEYYDPMYAFQRQSKEDRVEFRGNQAEVIGYLRQRQALRPS.

A Rhodanese domain is found at 12–136 (FLDDIPLMDV…LRNFLFETTR (125 aa)). C95 functions as the S-selanylcysteine intermediate in the catalytic mechanism.

This sequence belongs to the SelU family. In terms of assembly, monomer.

It catalyses the reaction 5-methylaminomethyl-2-thiouridine(34) in tRNA + selenophosphate + (2E)-geranyl diphosphate + H2O + H(+) = 5-methylaminomethyl-2-selenouridine(34) in tRNA + (2E)-thiogeraniol + phosphate + diphosphate. It carries out the reaction 5-methylaminomethyl-2-thiouridine(34) in tRNA + (2E)-geranyl diphosphate = 5-methylaminomethyl-S-(2E)-geranyl-thiouridine(34) in tRNA + diphosphate. The catalysed reaction is 5-methylaminomethyl-S-(2E)-geranyl-thiouridine(34) in tRNA + selenophosphate + H(+) = 5-methylaminomethyl-2-(Se-phospho)selenouridine(34) in tRNA + (2E)-thiogeraniol. The enzyme catalyses 5-methylaminomethyl-2-(Se-phospho)selenouridine(34) in tRNA + H2O = 5-methylaminomethyl-2-selenouridine(34) in tRNA + phosphate. Functionally, involved in the post-transcriptional modification of the uridine at the wobble position (U34) of tRNA(Lys), tRNA(Glu) and tRNA(Gln). Catalyzes the conversion of 2-thiouridine (S2U-RNA) to 2-selenouridine (Se2U-RNA). Acts in a two-step process involving geranylation of 2-thiouridine (S2U) to S-geranyl-2-thiouridine (geS2U) and subsequent selenation of the latter derivative to 2-selenouridine (Se2U) in the tRNA chain. The protein is tRNA 2-selenouridine synthase of Pseudomonas aeruginosa (strain LESB58).